Here is a 578-residue protein sequence, read N- to C-terminus: MIRLPRLYQRYLLYLVVFVVIALFYFLQAPRVEEHIGFDLALPISHVDNLWFQNKGLEGFSNDDKLVVNIGYDECFHIGRFYEGCFNRHELKSTLTDGHQYLQRKRIHKDLRGSFGRRWFGKSEYLYYDVLYPALVDYFGSNLEKLNVEAVTGISKYPKDKSLPFMDVSITFEPISIELLQKRSYISDINILFGVDCIQPIANWTLQKEFPLVKYRYSEPAYLTYKFVGTRPVDTGAQRLQETDEGKFKIVQLADLHLGVGESECIDEYPKHEACKADPKTETFVQQVLDIEKPQLVVFTGDQIMGDRSIQDSETVLLKAVAPVIARKIPWAMVWGNHDDEGSLTRWQLSEIASVLPYSLFKFSPHDTHDNTFGVGNYIYQIFSNNDTEVPVGTLYFLDSHKYSTVGKIYPGYDWIKESQWKYIEDYHDVNLKFKTGLSMAFFHIPLPEYLNIESKTHPGEKNPLIGMYKEGVTAPKYNSEGITTLDRLSVDVVSCGHDHCNDYCLRDDSTPNKIWLCYGGGGGEGGYAGYGGTERRIRIYEINVNENNIHTWKRLNGSPKEIFDFQSMLDGNSPESV.

116–123 (GRRWFGKS) provides a ligand contact to ATP.

The protein localises to the cytoplasm. Its function is as follows. Required for cell cycle progression. Has a role in the completion of START. The protein is Phosphatase DCR2 (DCR2) of Saccharomyces cerevisiae (strain ATCC 204508 / S288c) (Baker's yeast).